Reading from the N-terminus, the 1155-residue chain is uncharacterized protein (1155 aa).

An N-terminal signal peptide occupies residues 1 to 19; it reads MKKNIFITSLLILLLLLSS. Cys-20 carries the N-palmitoyl cysteine lipid modification. Cys-20 carries S-diacylglycerol cysteine lipidation. Transmembrane regions (helical) follow at residues 289–309, 395–415, 424–444, and 459–479; these read ISVS…FLIG, LGFI…FLIF, ALIT…FMLF, and ISYA…SMII.

The protein belongs to the TrbL/VirB6 family.

The protein localises to the cell membrane. This is an uncharacterized protein from Rickettsia prowazekii (strain Madrid E).